Reading from the N-terminus, the 316-residue chain is MTESFQHISVLLHESIEGLAIKPDGIYIDGTFGRGGHSRTILSQLGENGRLYSIDRDPQAIAEAKTIDDPRFTIVHGPFSGIAHYAKQHGLAGKVDGVLFDLGVSSPQLDDAERGFSFMKDGPLDMRMDPTSGIPVSQWLMEADLDDITWVIREFGEDKHARRIAKAIVAYRENEENEPLKRTSQLAKLISDAAPKSFKEKKHPATRAFQAFRIYINSELEEIDTALKGAAEILAPQGRLSVISFHSLEDRMVKRFIRKESQGPQVPHGIPMTEAQIQALGSANMKAIGKAIKPSKQEIELNPRSRSSVLRIAEKL.

S-adenosyl-L-methionine-binding positions include 35 to 37 (GGH), Asp-55, Phe-79, Asp-101, and Gln-108.

The protein belongs to the methyltransferase superfamily. RsmH family.

It localises to the cytoplasm. The enzyme catalyses cytidine(1402) in 16S rRNA + S-adenosyl-L-methionine = N(4)-methylcytidine(1402) in 16S rRNA + S-adenosyl-L-homocysteine + H(+). In terms of biological role, specifically methylates the N4 position of cytidine in position 1402 (C1402) of 16S rRNA. This is Ribosomal RNA small subunit methyltransferase H from Vibrio proteolyticus (Aeromonas proteolytica).